Reading from the N-terminus, the 450-residue chain is Serine--tRNA ligase, cytoplasmic (450 aa).

Thr238 to Glu240 serves as a coordination point for L-serine. Residues Arg271–Glu273 and Val287 each bind ATP. Position 294 (Glu294) interacts with L-serine. Residue Glu358–Ser361 participates in ATP binding. Thr396 is a binding site for L-serine.

Belongs to the class-II aminoacyl-tRNA synthetase family. Type-1 seryl-tRNA synthetase subfamily. As to quaternary structure, homodimer. The tRNA molecule binds across the dimer.

It localises to the cytoplasm. It is found in the cytosol. The catalysed reaction is tRNA(Ser) + L-serine + ATP = L-seryl-tRNA(Ser) + AMP + diphosphate + H(+). Catalyzes the attachment of serine to tRNA(Ser) in a two-step reaction: serine is first activated by ATP to form Ser-AMP and then transferred to the acceptor end of tRNA(Ser). The sequence is that of Serine--tRNA ligase, cytoplasmic from Schizosaccharomyces pombe (strain 972 / ATCC 24843) (Fission yeast).